Consider the following 519-residue polypeptide: Ribonuclease Y (519 aa).

The chain crosses the membrane as a helical span at residues 3–23 (PLAILISILLSLFCLVVGYYV). Positions 209 to 272 (TVSVVNLPND…ETARIALDKL (64 aa)) constitute a KH domain. In terms of domain architecture, HD spans 335–428 (VLKHSMEVAF…VAAADALSAA (94 aa)).

The protein belongs to the RNase Y family.

It localises to the cell membrane. In terms of biological role, endoribonuclease that initiates mRNA decay. This chain is Ribonuclease Y, found in Bacillus licheniformis (strain ATCC 14580 / DSM 13 / JCM 2505 / CCUG 7422 / NBRC 12200 / NCIMB 9375 / NCTC 10341 / NRRL NRS-1264 / Gibson 46).